We begin with the raw amino-acid sequence, 2121 residues long: Non-reducing polyketide synthase aoiG (2121 aa).

The 254-residue stretch at 5 to 258 folds into the Starter acyltransferase (SAT) domain; the sequence is YIFGDQTVRV…LPVSIYAPYH (254 aa). The 432-residue stretch at 386–817 folds into the Ketosynthase family 3 (KS3) domain; the sequence is SSKIAIIGFS…GGNTAVLVED (432 aa). Catalysis depends on for beta-ketoacyl synthase activity residues cysteine 558, histidine 693, and histidine 735. Positions 921 to 1239 constitute a Malonyl-CoA:ACP transacylase (MAT) domain; it reads FLFTGQGAQQ…LSVLHLAGVR (319 aa). Residues 1302-1433 form an N-terminal hotdog fold region; it reads QKILEEEMTA…CTIELQRPHQ (132 aa). Residues 1302–1608 enclose the PKS/mFAS DH domain; the sequence is QKILEEEMTA…FQKVARRVLE (307 aa). Catalysis depends on histidine 1334, which acts as the Proton acceptor; for dehydratase activity. The C-terminal hotdog fold stretch occupies residues 1461–1608; the sequence is THKMRRGVAY…FQKVARRVLE (148 aa). The active-site Proton donor; for dehydratase activity is aspartate 1519. Positions 1646–1723 constitute a Carrier 1 domain; sequence PHVEDAWQQV…SLRIYLNMSS (78 aa). O-(pantetheine 4'-phosphoryl)serine is present on serine 1683. The segment covering 1728 to 1752 has biased composition (low complexity); that stretch reads DSIETSSYPTPDESTTTTITSPSGS. The tract at residues 1728-1760 is disordered; it reads DSIETSSYPTPDESTTTTITSPSGSDRNVGRNS. Residues 1763 to 1840 enclose the Carrier 2 domain; the sequence is DGVGTTVGLV…AITAALHAIF (78 aa). An O-(pantetheine 4'-phosphoryl)serine modification is found at serine 1800. The tract at residues 1872-1976 is TE/CLC (thioesterase/Claisen cyclase) domain; that stretch reads TLFLFPDGSG…ILIDSPNPMG (105 aa).

Requires pantetheine 4'-phosphate as cofactor.

Functionally, non-reducing polyketide synthase; part of the gene cluster that mediates the biosynthesis of a methylated derivative of known natural products orthosporin and diaporthin. AoiG catalyzes the biosynthesis of the hexaketide isocoumarin scaffold, via condensation of one acetyl-CoA starter unit with 6 malonyl-CoA units. An oxidoreductase that has still to be identified catalyzes the stereospecific reduction of the carbonyl moiety of the hexaketide isocoumarin scaffold to generate the S-configured secondary alcohol at C-11 of orthosporin. The methyltrasferase aoiF then catalyzes the biotransformation of not only orthosporin to diaporthin but also diaporthin to the final product, by performing a tandem methylation of the polyketide core. This Aspergillus oryzae (strain ATCC 42149 / RIB 40) (Yellow koji mold) protein is Non-reducing polyketide synthase aoiG.